Consider the following 2531-residue polypeptide: Talin (2531 aa).

Residues 87 to 401 (RPLRVRMMDE…GYIDIILKKK (315 aa)) enclose the FERM domain. Residues 598-621 (GEKLLEAARGLAGAVRHLLKSAEP) form an interaction with VIN1 region. The region spanning 2287-2526 (TDWVDPSDPN…KIRHDKYKRH (240 aa)) is the I/LWEQ domain. A disordered region spans residues 2466-2485 (AAKRSSEEGDDEEVSGGGQE).

In terms of assembly, interacts with VIN1 (vinculin); the interaction facilitates VIN1 binding to F-actin.

Its subcellular location is the cytoplasm. The protein resides in the cytoskeleton. It localises to the cell cortex. Probably involved in connections of major cytoskeletal structures to the plasma membrane. In Oscarella pearsei (Sponge), this protein is Talin.